Reading from the N-terminus, the 602-residue chain is Leishmanolysin (602 aa).

Residues 1–39 (MSVDSSSTHRRRCVAARLVRLAAAGAAVTVAVGTAAAWA) form the signal peptide. Residues 40 to 100 (HAGALQHRCV…DPRPGSARSV (61 aa)) constitute a propeptide, activation peptide. Intrachain disulfides connect Cys125–Cys142 and Cys191–Cys230. A Zn(2+)-binding site is contributed by His264. The active site involves Glu265. Position 268 (His268) interacts with Zn(2+). N-linked (GlcNAc...) asparagine glycosylation occurs at Asn300. 7 disulfide bridges follow: Cys314–Cys386, Cys393–Cys455, Cys406–Cys425, Cys415–Cys489, Cys466–Cys510, Cys515–Cys565, and Cys535–Cys558. Zn(2+) is bound at residue His334. Asn407 carries an N-linked (GlcNAc...) asparagine glycan. N-linked (GlcNAc...) asparagine glycosylation is present at Asn534. The GPI-anchor amidated asparagine moiety is linked to residue Asn577. Residues 578–602 (TAAGRRGPRAAATALLVAALLAVAL) constitute a propeptide, removed in mature form.

It belongs to the peptidase M8 family. Requires Zn(2+) as cofactor. The phosphatidylinositol moiety of the GPI-anchor contains a fully saturated, unbranched 1-O-alkyl chain (mainly C24:0) and a mixture of fully saturated unbranched 2-O-acyl chains (C12:0, C14:0, C16:0, and C18:0).

The protein localises to the cell membrane. It carries out the reaction Preference for hydrophobic residues at P1 and P1' and basic residues at P2' and P3'. A model nonapeptide is cleaved at -Ala-Tyr-|-Leu-Lys-Lys-.. Functionally, has an integral role during the infection of macrophages in the mammalian host. This is Leishmanolysin (gp63) from Leishmania major.